The sequence spans 237 residues: Large ribosomal subunit protein uL1 (237 aa).

This sequence belongs to the universal ribosomal protein uL1 family. In terms of assembly, part of the 50S ribosomal subunit.

Its function is as follows. Binds directly to 23S rRNA. The L1 stalk is quite mobile in the ribosome, and is involved in E site tRNA release. Protein L1 is also a translational repressor protein, it controls the translation of the L11 operon by binding to its mRNA. The sequence is that of Large ribosomal subunit protein uL1 from Dehalococcoides mccartyi (strain CBDB1).